A 356-amino-acid polypeptide reads, in one-letter code: 3-isopropylmalate dehydrogenase (356 aa).

Substrate contacts are provided by Arg90, Arg100, Arg128, and Asp222. Residues Asp222, Asp246, and Asp250 each coordinate Mg(2+). 280–292 (GSAPDIAGKGVAN) contributes to the NAD(+) binding site.

It belongs to the isocitrate and isopropylmalate dehydrogenases family. LeuB type 1 subfamily. As to quaternary structure, homodimer. Mg(2+) is required as a cofactor. It depends on Mn(2+) as a cofactor.

The protein resides in the cytoplasm. It carries out the reaction (2R,3S)-3-isopropylmalate + NAD(+) = 4-methyl-2-oxopentanoate + CO2 + NADH. The protein operates within amino-acid biosynthesis; L-leucine biosynthesis; L-leucine from 3-methyl-2-oxobutanoate: step 3/4. Catalyzes the oxidation of 3-carboxy-2-hydroxy-4-methylpentanoate (3-isopropylmalate) to 3-carboxy-4-methyl-2-oxopentanoate. The product decarboxylates to 4-methyl-2 oxopentanoate. The sequence is that of 3-isopropylmalate dehydrogenase from Albidiferax ferrireducens (strain ATCC BAA-621 / DSM 15236 / T118) (Rhodoferax ferrireducens).